Reading from the N-terminus, the 140-residue chain is Neurotrophin-7 (140 aa).

The propeptide occupies P1–R7. Intrachain disulfides connect C21–C101, C64–C129, and C89–C131.

The protein belongs to the NGF-beta family.

It localises to the secreted. The polypeptide is Neurotrophin-7 (ntf7) (Cyprinus carpio (Common carp)).